Consider the following 129-residue polypeptide: MTYESKTGNVKRFVKALQQEFDVEAIEITDDTIINQEFIHITYTIGFGEVPERTLSFINKNKNKIRGVAVSGNKVWGDNYGLAGDKLSAKFHTPLLLKFELSGTKQDLQKIIQEVQLIDKHNTKLDQAQ.

The protein belongs to the NrdI family.

In terms of biological role, probably involved in ribonucleotide reductase function. The protein is SPbeta prophage-derived protein NrdI (nrdIB) of Bacillus subtilis (strain 168).